Reading from the N-terminus, the 419-residue chain is Serine hydroxymethyltransferase (419 aa).

(6S)-5,6,7,8-tetrahydrofolate contacts are provided by residues L119 and 123 to 125 (GHL). K228 is subject to N6-(pyridoxal phosphate)lysine.

Belongs to the SHMT family. In terms of assembly, homodimer. Pyridoxal 5'-phosphate serves as cofactor.

It is found in the cytoplasm. It catalyses the reaction (6R)-5,10-methylene-5,6,7,8-tetrahydrofolate + glycine + H2O = (6S)-5,6,7,8-tetrahydrofolate + L-serine. It participates in one-carbon metabolism; tetrahydrofolate interconversion. It functions in the pathway amino-acid biosynthesis; glycine biosynthesis; glycine from L-serine: step 1/1. In terms of biological role, catalyzes the reversible interconversion of serine and glycine with tetrahydrofolate (THF) serving as the one-carbon carrier. This reaction serves as the major source of one-carbon groups required for the biosynthesis of purines, thymidylate, methionine, and other important biomolecules. Also exhibits THF-independent aldolase activity toward beta-hydroxyamino acids, producing glycine and aldehydes, via a retro-aldol mechanism. The protein is Serine hydroxymethyltransferase of Desulfosudis oleivorans (strain DSM 6200 / JCM 39069 / Hxd3) (Desulfococcus oleovorans).